The sequence spans 133 residues: ATP synthase epsilon chain (133 aa).

It belongs to the ATPase epsilon chain family. In terms of assembly, F-type ATPases have 2 components, CF(1) - the catalytic core - and CF(0) - the membrane proton channel. CF(1) has five subunits: alpha(3), beta(3), gamma(1), delta(1), epsilon(1). CF(0) has three main subunits: a, b and c.

It localises to the cell membrane. Its function is as follows. Produces ATP from ADP in the presence of a proton gradient across the membrane. This is ATP synthase epsilon chain from Geobacillus thermodenitrificans (strain NG80-2).